The sequence spans 351 residues: Ion-translocating oxidoreductase complex subunit D (351 aa).

Helical transmembrane passes span 20–40 (IMLW…YFFG), 44–64 (LIQV…TLSL), 89–109 (LPPL…IIIA), and 123–143 (PAMI…TSWL). Thr-187 is modified (FMN phosphoryl threonine). Transmembrane regions (helical) follow at residues 215–235 (LSGI…LFLL), 244–264 (IPVS…IIAP), 267–287 (FAQP…FFIA), 301–321 (LIFG…GGYP), and 322–342 (DGVA…DYYT).

This sequence belongs to the NqrB/RnfD family. In terms of assembly, the complex is composed of six subunits: RnfA, RnfB, RnfC, RnfD, RnfE and RnfG. It depends on FMN as a cofactor.

Its subcellular location is the cell inner membrane. Its function is as follows. Part of a membrane-bound complex that couples electron transfer with translocation of ions across the membrane. This is Ion-translocating oxidoreductase complex subunit D from Pectobacterium atrosepticum (strain SCRI 1043 / ATCC BAA-672) (Erwinia carotovora subsp. atroseptica).